Here is a 340-residue protein sequence, read N- to C-terminus: Protein pelota homolog (340 aa).

Belongs to the eukaryotic release factor 1 family. Pelota subfamily. As to quaternary structure, monomer. Requires a divalent metal cation as cofactor.

The protein resides in the cytoplasm. In terms of biological role, may function in recognizing stalled ribosomes, interact with stem-loop structures in stalled mRNA molecules, and effect endonucleolytic cleavage of the mRNA. May play a role in the release non-functional ribosomes and degradation of damaged mRNAs. Has endoribonuclease activity. The sequence is that of Protein pelota homolog from Methanosphaerula palustris (strain ATCC BAA-1556 / DSM 19958 / E1-9c).